A 314-amino-acid polypeptide reads, in one-letter code: Glycine--tRNA ligase alpha subunit (314 aa).

The protein belongs to the class-II aminoacyl-tRNA synthetase family. As to quaternary structure, tetramer of two alpha and two beta subunits.

It is found in the cytoplasm. The catalysed reaction is tRNA(Gly) + glycine + ATP = glycyl-tRNA(Gly) + AMP + diphosphate. The polypeptide is Glycine--tRNA ligase alpha subunit (Mesorhizobium japonicum (strain LMG 29417 / CECT 9101 / MAFF 303099) (Mesorhizobium loti (strain MAFF 303099))).